We begin with the raw amino-acid sequence, 277 residues long: Phosphonates import ATP-binding protein PhnC 2 (277 aa).

The ABC transporter domain maps to 5-253 (IHVQGLNKTF…FLNDLYGADA (249 aa)). ATP is bound at residue 37–44 (GASGSGKS).

The protein belongs to the ABC transporter superfamily. Phosphonates importer (TC 3.A.1.9.1) family. In terms of assembly, the complex is composed of two ATP-binding proteins (PhnC), two transmembrane proteins (PhnE) and a solute-binding protein (PhnD).

The protein localises to the cell inner membrane. It carries out the reaction phosphonate(out) + ATP + H2O = phosphonate(in) + ADP + phosphate + H(+). Functionally, part of the ABC transporter complex PhnCDE involved in phosphonates import. Responsible for energy coupling to the transport system. The sequence is that of Phosphonates import ATP-binding protein PhnC 2 from Pseudomonas syringae pv. syringae (strain B728a).